The chain runs to 231 residues: Large ribosomal subunit protein uL1 (231 aa).

This sequence belongs to the universal ribosomal protein uL1 family. As to quaternary structure, part of the 50S ribosomal subunit.

Binds directly to 23S rRNA. The L1 stalk is quite mobile in the ribosome, and is involved in E site tRNA release. In terms of biological role, protein L1 is also a translational repressor protein, it controls the translation of the L11 operon by binding to its mRNA. This chain is Large ribosomal subunit protein uL1, found in Alcanivorax borkumensis (strain ATCC 700651 / DSM 11573 / NCIMB 13689 / SK2).